The primary structure comprises 207 residues: Phosphatidylinositol phosphate synthase (207 aa).

The next 2 membrane-spanning stretches (helical) occupy residues 21–44 (LRAH…MALI) and 50–67 (WLWQ…SDSL). 28-31 (DVVT) provides a ligand contact to a CDP-1,2-diacyl-sn-glycerol. Residues D65 and D68 each contribute to the Mg(2+) site. Residues G69, R73, and S79 each coordinate a CDP-1,2-diacyl-sn-glycerol. Mg(2+)-binding residues include D86 and D90. 4 consecutive transmembrane segments (helical) span residues 88–106 (TLDR…LYFA), 112–131 (VLWT…TSYV), 152–170 (RLLV…RVGA), and 176–195 (VVAL…ITVV). The Proton acceptor role is filled by D90.

The protein belongs to the CDP-alcohol phosphatidyltransferase class-I family. Homodimer. It depends on Mg(2+) as a cofactor.

Its subcellular location is the cell membrane. It catalyses the reaction a CDP-1,2-diacyl-sn-glycerol + 1D-myo-inositol 3-phosphate = a 1,2-diacyl-sn-glycero-3-phospho-(1D-myo-inositol-3-phosphate) + CMP + H(+). The enzyme catalyses 1,2-di-(9Z-octadecenoyl)-sn-glycero-3-cytidine-5'-diphosphate + 1D-myo-inositol 3-phosphate = 1,2-di-(9Z-octadecenoyl)-sn-glycero-3-phospho-(1D-myo-inositol-3-phosphate) + CMP + H(+). It participates in phospholipid metabolism; phosphatidylinositol phosphate biosynthesis. In terms of biological role, catalyzes the conjugation of the 1'-hydroxyl group of D-myo-inositol-3-phosphate (also named L-myo-inositol-1-phosphate) with a lipid tail of cytidine diphosphate diacylglycerol (CDP-DAG), forming phosphatidylinositol phosphate (PIP) and CMP. PIP is a precursor of phosphatidylinositol (PI) which is an essential lipid required for cell wall formation. This chain is Phosphatidylinositol phosphate synthase, found in Cutibacterium acnes (strain DSM 16379 / KPA171202) (Propionibacterium acnes).